We begin with the raw amino-acid sequence, 917 residues long: Calcium-activated chloride channel regulator 1 (917 aa).

Positions 1-21 (MGSFRSSLFILVLHLLEGAQS) are cleaved as a signal peptide. A metalloprotease domain region spans residues 46–199 (DERLIQNIKD…AIRGTNVLPQ (154 aa)). Position 156 (His-156) interacts with Zn(2+). Glu-157 is an active-site residue. Zn(2+) is bound by residues His-160 and Asn-167. Residues 306-475 (IVCLVLDKSG…NGLIDAFGAL (170 aa)) enclose the VWFA domain. Asn-503, Asn-772, Asn-806, Asn-812, Asn-838, and Asn-893 each carry an N-linked (GlcNAc...) asparagine glycan.

It belongs to the CLCR family. Glycosylated. In terms of processing, the translation product is autoproteolytically cleaved by the metalloprotease domain in the endoplasmic reticulum into a N-terminal and a C-terminal products that remain physically associated with each other. The cleavage is necessary for calcium-activated chloride channel (CaCC) activation activity. Expressed in ileum, trachea, and the major salivary glands. In ileum, expressed to the crypt and villus epithelia, whereas in trachea expressed in both surface epithelium and submucosal glands.

The protein resides in the secreted. It is found in the extracellular space. Functionally, may be involved in mediating calcium-activated chloride conductance. May play critical roles in goblet cell metaplasia, mucus hypersecretion, cystic fibrosis and AHR. May be involved in the regulation of mucus production and/or secretion by goblet cells. Involved in the regulation of tissue inflammation in the innate immune response. May play a role as a tumor suppressor. Induces MUC5AC. Induces a cAMP-dependent chloride conductance possibly through effects on CFTR in colon carcinoma cells. The sequence is that of Calcium-activated chloride channel regulator 1 (CLCA1) from Sus scrofa (Pig).